Reading from the N-terminus, the 363-residue chain is LIM and cysteine-rich domains protein 1 (363 aa).

Phosphoserine is present on S16. Residues 99–206 (MIMTNPIATG…GEVALPGQGG (108 aa)) form the PET domain. The tract at residues 200–233 (ALPGQGGLPKEEGKQQEKPEGAETAAPTANGSLG) is disordered. The span at 208–220 (PKEEGKQQEKPEG) shows a compositional bias: basic and acidic residues. LIM zinc-binding domains are found at residues 239–304 (YVCE…SLRP) and 305–363 (RCSG…SKRT).

Interacts with beta-dystroglycan. Interacts with GATA1, GATA4 and GATA6. In terms of tissue distribution, highly expressed in both skeletal muscle and cardiac muscle.

It localises to the cytoplasm. The protein resides in the nucleus. Functionally, transcriptional cofactor that restricts GATA6 function by inhibiting DNA-binding, resulting in repression of GATA6 transcriptional activation of downstream target genes. Represses GATA6-mediated trans activation of lung- and cardiac tissue-specific promoters. Inhibits DNA-binding by GATA4 and GATA1 to the cTNC promoter. Plays a critical role in the development of cardiac hypertrophy via activation of calcineurin/nuclear factor of activated T-cells signaling pathway. The sequence is that of LIM and cysteine-rich domains protein 1 (LMCD1) from Sus scrofa (Pig).